The chain runs to 427 residues: 3-phosphoshikimate 1-carboxyvinyltransferase (427 aa).

3-phosphoshikimate-binding residues include K22, S23, and R27. K22 contributes to the phosphoenolpyruvate binding site. Residues G97 and R125 each coordinate phosphoenolpyruvate. Residues S171, S172, Q173, S199, D315, N338, and K342 each contribute to the 3-phosphoshikimate site. Residue Q173 coordinates phosphoenolpyruvate. D315 functions as the Proton acceptor in the catalytic mechanism. Residues R346, R388, and K413 each contribute to the phosphoenolpyruvate site.

This sequence belongs to the EPSP synthase family. As to quaternary structure, monomer.

It localises to the cytoplasm. It catalyses the reaction 3-phosphoshikimate + phosphoenolpyruvate = 5-O-(1-carboxyvinyl)-3-phosphoshikimate + phosphate. It functions in the pathway metabolic intermediate biosynthesis; chorismate biosynthesis; chorismate from D-erythrose 4-phosphate and phosphoenolpyruvate: step 6/7. Catalyzes the transfer of the enolpyruvyl moiety of phosphoenolpyruvate (PEP) to the 5-hydroxyl of shikimate-3-phosphate (S3P) to produce enolpyruvyl shikimate-3-phosphate and inorganic phosphate. The sequence is that of 3-phosphoshikimate 1-carboxyvinyltransferase from Aliivibrio salmonicida (strain LFI1238) (Vibrio salmonicida (strain LFI1238)).